A 208-amino-acid polypeptide reads, in one-letter code: Guanylate kinase (208 aa).

Residues 5–184 form the Guanylate kinase-like domain; the sequence is GLLIVFSGPS…AAERVKCVIE (180 aa). An ATP-binding site is contributed by 12 to 19; sequence GPSGVGKG.

It belongs to the guanylate kinase family.

It localises to the cytoplasm. It carries out the reaction GMP + ATP = GDP + ADP. Its function is as follows. Essential for recycling GMP and indirectly, cGMP. In Streptococcus pneumoniae serotype 4 (strain ATCC BAA-334 / TIGR4), this protein is Guanylate kinase.